The sequence spans 611 residues: Mitogen-activated protein kinase 10 (611 aa).

Residues 25–316 (YKIQEVIGKG…AEEALAHPYF (292 aa)) enclose the Protein kinase domain. ATP is bound by residues 31 to 39 (IGKGSYGVV) and Lys-54. Residue Asp-151 is the Proton acceptor of the active site. Thr-187 bears the Phosphothreonine mark. The short motif at 187-189 (TDY) is the TXY element. Tyr-189 is modified (phosphotyrosine). The interval 394 to 481 (ENGGNGPVIP…RVVGPVLPYE (88 aa)) is disordered. Basic and acidic residues predominate over residues 426–439 (EQPRIGPSRDKPSD).

This sequence belongs to the protein kinase superfamily. CMGC Ser/Thr protein kinase family. MAP kinase subfamily. Post-translationally, dually phosphorylated on Thr-187 and Tyr-189, which activates the enzyme.

The catalysed reaction is L-seryl-[protein] + ATP = O-phospho-L-seryl-[protein] + ADP + H(+). It carries out the reaction L-threonyl-[protein] + ATP = O-phospho-L-threonyl-[protein] + ADP + H(+). With respect to regulation, activated by threonine and tyrosine phosphorylation. In Oryza sativa subsp. japonica (Rice), this protein is Mitogen-activated protein kinase 10 (MPK10).